A 547-amino-acid chain; its full sequence is ATP synthase subunit beta, mitochondrial (547 aa).

The transit peptide at 1–45 (MASRRLLSSFLRSSTRRSLRPSFSNPRPSFLTSYCSSPASILRRY) directs the protein to the mitochondrion. Residues 52 to 62 (KEPAASKPAGT) show a composition bias toward low complexity. Positions 52–74 (KEPAASKPAGTAGTGKGTITDEK) are disordered. 226 to 233 (GGDWVGKT) is a binding site for ATP.

It belongs to the ATPase alpha/beta chains family. F-type ATPases have 2 components, CF(1) - the catalytic core - and CF(0) - the membrane proton channel. CF(1) has five subunits: alpha(3), beta(3), gamma(1), delta(1), epsilon(1). CF(0) has three main subunits: a, b and c.

It localises to the mitochondrion. It is found in the mitochondrion inner membrane. The catalysed reaction is ATP + H2O + 4 H(+)(in) = ADP + phosphate + 5 H(+)(out). Mitochondrial membrane ATP synthase (F(1)F(0) ATP synthase or Complex V) produces ATP from ADP in the presence of a proton gradient across the membrane which is generated by electron transport complexes of the respiratory chain. F-type ATPases consist of two structural domains, F(1) - containing the extramembraneous catalytic core, and F(0) - containing the membrane proton channel, linked together by a central stalk and a peripheral stalk. During catalysis, ATP synthesis in the catalytic domain of F(1) is coupled via a rotary mechanism of the central stalk subunits to proton translocation. Subunits alpha and beta form the catalytic core in F(1). Rotation of the central stalk against the surrounding alpha(3)beta(3) subunits leads to hydrolysis of ATP in three separate catalytic sites on the beta subunits. The sequence is that of ATP synthase subunit beta, mitochondrial (ATPB) from Daucus carota (Wild carrot).